Here is a 554-residue protein sequence, read N- to C-terminus: Eukaryotic translation initiation factor 3 subunit D-2 (554 aa).

A disordered region spans residues 116–149 (RGNAAIGGGQGGAGGTGGAGVGNKYGKGRDMRRG). Residues 120-140 (AIGGGQGGAGGTGGAGVGNKY) show a composition bias toward gly residues. The RNA gate stretch occupies residues 291 to 305 (QFDLLTVNETALEPP). A disordered region spans residues 532–554 (FDSDGNDDEETSDDRPFLKSLGN).

This sequence belongs to the eIF-3 subunit D family. Component of the eukaryotic translation initiation factor 3 (eIF-3) complex. The eIF-3 complex interacts with pix.

Its subcellular location is the cytoplasm. MRNA cap-binding component of the eukaryotic translation initiation factor 3 (eIF-3) complex, which is involved in protein synthesis of a specialized repertoire of mRNAs and, together with other initiation factors, stimulates binding of mRNA and methionyl-tRNAi to the 40S ribosome. The eIF-3 complex specifically targets and initiates translation of a subset of mRNAs involved in cell proliferation. In the eIF-3 complex, eif3d specifically recognizes and binds the 7-methylguanosine cap of a subset of mRNAs. This Drosophila virilis (Fruit fly) protein is Eukaryotic translation initiation factor 3 subunit D-2.